The chain runs to 90 residues: Small ribosomal subunit protein bS16 (90 aa).

This sequence belongs to the bacterial ribosomal protein bS16 family.

The chain is Small ribosomal subunit protein bS16 from Fervidobacterium nodosum (strain ATCC 35602 / DSM 5306 / Rt17-B1).